The primary structure comprises 64 residues: DNA-binding protein 7b (64 aa).

An N6-methyllysine mark is found at Lys-5 and Lys-7.

It belongs to the 7 kDa DNA-binding/endoribonuclease P2 family. As to quaternary structure, monomer. In terms of processing, lys-5 and Lys-7 may be methylated.

It localises to the cytoplasm. In terms of biological role, can constrain negative DNA supercoils. May be involved in maintaining the integrity of the genome at high temperature. The polypeptide is DNA-binding protein 7b (Saccharolobus shibatae (strain ATCC 51178 / DSM 5389 / JCM 8931 / NBRC 15437 / B12) (Sulfolobus shibatae)).